The sequence spans 436 residues: Histidinol dehydrogenase (436 aa).

NAD(+)-binding residues include Tyr-130, Gln-191, and Asn-214. Residues Ser-237, Gln-259, and His-262 each coordinate substrate. Residues Gln-259 and His-262 each coordinate Zn(2+). Catalysis depends on proton acceptor residues Glu-327 and His-328. Substrate-binding residues include His-328, Asp-361, Glu-415, and His-420. Asp-361 serves as a coordination point for Zn(2+). Residue His-420 coordinates Zn(2+).

The protein belongs to the histidinol dehydrogenase family. Zn(2+) is required as a cofactor.

It catalyses the reaction L-histidinol + 2 NAD(+) + H2O = L-histidine + 2 NADH + 3 H(+). The protein operates within amino-acid biosynthesis; L-histidine biosynthesis; L-histidine from 5-phospho-alpha-D-ribose 1-diphosphate: step 9/9. In terms of biological role, catalyzes the sequential NAD-dependent oxidations of L-histidinol to L-histidinaldehyde and then to L-histidine. The chain is Histidinol dehydrogenase from Geobacter metallireducens (strain ATCC 53774 / DSM 7210 / GS-15).